Reading from the N-terminus, the 305-residue chain is Sodium/potassium-transporting ATPase subunit beta-1 (305 aa).

Topologically, residues 1 to 32 (MAREKSTDDGGGWKKFLWDSEKKQVLGRTGTS) are cytoplasmic. Residues 33 to 53 (WFKIFVFYLIFYGCLAGIFIG) form a helical; Signal-anchor for type II membrane protein membrane-spanning segment. At 54 to 305 (TIQVMLLTIS…RFEVKIEVKS (252 aa)) the chain is on the extracellular side. The N-linked (GlcNAc...) asparagine glycan is linked to N114. Residues C127 and C150 are joined by a disulfide bond. The N-linked (GlcNAc...) asparagine glycan is linked to N159. A disulfide bridge links C160 with C176. N-linked (GlcNAc...) asparagine glycans are attached at residues N194 and N267. A disulfide bridge links C215 with C278.

Belongs to the X(+)/potassium ATPases subunit beta family. The sodium/potassium-transporting ATPase is composed of a catalytic alpha subunit, an auxiliary non-catalytic beta subunit and an additional regulatory subunit.

The protein localises to the cell membrane. In terms of biological role, this is the non-catalytic component of the active enzyme, which catalyzes the hydrolysis of ATP coupled with the exchange of Na(+) and K(+) ions across the plasma membrane. The beta subunit regulates, through assembly of alpha/beta heterodimers, the number of sodium pumps transported to the plasma membrane. The protein is Sodium/potassium-transporting ATPase subunit beta-1 (atp1b1) of Tetronarce californica (Pacific electric ray).